The chain runs to 153 residues: Cell division protein SepF (153 aa).

Belongs to the SepF family. Homodimer. Interacts with FtsZ.

The protein resides in the cytoplasm. Functionally, cell division protein that is part of the divisome complex and is recruited early to the Z-ring. Probably stimulates Z-ring formation, perhaps through the cross-linking of FtsZ protofilaments. Its function overlaps with FtsA. The chain is Cell division protein SepF from Clostridium novyi (strain NT).